A 423-amino-acid polypeptide reads, in one-letter code: 5-hydroxytryptamine receptor 1A (423 aa).

The interval 1–20 (MEGLSPGQGNNTTSSEGPFG) is disordered. Over 1-38 (MEGLSPGQGNNTTSSEGPFGTRGNATGISDVTFSYQVI) the chain is Extracellular. Positions 7–16 (GQGNNTTSSE) are enriched in polar residues. N-linked (GlcNAc...) asparagine glycosylation is found at Asn-10, Asn-11, and Asn-24. A helical transmembrane segment spans residues 39–59 (TSLLLGTLIFCAVLGNACVVA). The Cytoplasmic portion of the chain corresponds to 60 to 73 (AIALERSLQNVANY). The helical transmembrane segment at 74-98 (LIGSLAVTDLMVSVLVLPMAALYQV) threads the bilayer. Over 99-107 (LNKWTLGQV) the chain is Extracellular. The helical transmembrane segment at 108-132 (TCDLFIALDVLCCTSSILHLCAIAL) threads the bilayer. Residues Cys-109 and Cys-187 are joined by a disulfide bond. Residues Asp-116 and Cys-120 each coordinate serotonin. The DRY motif; important for ligand-induced conformation changes motif lies at 133–135 (DRY). Residues 133 to 152 (DRYWAITDPIDYVNKRTPRR) lie on the Cytoplasmic side of the membrane. Residues 153–174 (AAALISLTWLIGFLISIPPMLG) form a helical membrane-spanning segment. Residues 175–193 (WRTPEDRSDPDACTISKDH) lie on the Extracellular side of the membrane. Residues 194-216 (GYTIYSTFGAFYIPLLLMLVLYG) traverse the membrane as a helical segment. Topologically, residues 217-346 (RIFRAARFRI…LARERKTVKT (130 aa)) are cytoplasmic. Residues 235–277 (RKGADARSGVSPAPQPRKSVNGEPGGREWRQGPGSKAGGPLCT) are disordered. Lys-345, Thr-346, and Gly-352 together coordinate 1D-myo-inositol 4-phosphate. Residues 347–370 (LGIIMGTFILCWLPFFIVALVLPF) form a helical membrane-spanning segment. Residues 371 to 378 (CESSCHMP) are Extracellular-facing. A helical membrane pass occupies residues 379–403 (TLLGAIINWLGYSNSLLNPVIYAYF). Residues 396–400 (NPVIY) carry the NPxxY motif; important for ligand-induced conformation changes and signaling motif. 1D-myo-inositol 4-phosphate contacts are provided by Phe-403, Asn-404, and Lys-405. At 404–423 (NKDFQNAFKKIVRCKFCRRR) the chain is on the cytoplasmic side.

The protein belongs to the G-protein coupled receptor 1 family. 5-hydroxytryptamine receptor subfamily. HTR1A sub-subfamily. As to quaternary structure, heterodimer; heterodimerizes with GPER1. Interacts with YIF1B. Interacts with GPR39 and GALR1.

The protein resides in the cell membrane. It localises to the cell projection. The protein localises to the dendrite. G-protein coupled receptor activity is regulated by lipids: phosphatidylinositol 4-phosphate increases HTR1A-mediated activity. In terms of biological role, G-protein coupled receptor for 5-hydroxytryptamine (serotonin). Also functions as a receptor for various drugs and psychoactive substances. Ligand binding causes a conformation change that triggers signaling via guanine nucleotide-binding proteins (G proteins) and modulates the activity of downstream effectors, such as adenylate cyclase. HTR1A is coupled to G(i)/G(o) G alpha proteins and mediates inhibitory neurotransmission: signaling inhibits adenylate cyclase activity and activates a phosphatidylinositol-calcium second messenger system that regulates the release of Ca(2+) ions from intracellular stores. Beta-arrestin family members regulate signaling by mediating both receptor desensitization and resensitization processes. The polypeptide is 5-hydroxytryptamine receptor 1A (HTR1A) (Vulpes vulpes (Red fox)).